A 284-amino-acid polypeptide reads, in one-letter code: N-acylphosphatidylethanolamine synthase (284 aa).

The helical transmembrane segment at 21–37 (TVIMAVSAFAKAVANLC) threads the bilayer. Positions 67 to 72 (HMSTLD) match the HXXXXD motif motif. The interval 122 to 163 (GGGIYQENMNEALQRLKDGSWLHTFPEGKVFQDDVPIRRLKW) is hydrophilic.

Belongs to the taffazin family. As to expression, essentially present in young tissues. Expressed in roots, cotyledons, leaves, and shoot and root apical meristems.

The protein localises to the cell membrane. Its function is as follows. Acyltransferase that catalyzes the N-acylation of phosphatidylethanolamine to form N-acylphosphatidylethanolamine (N-acyl-PE) (e.g. NAPEs containing C16:0, C16:1, C18:0, and C18:1). Also mediates the formation of acylphosphatidylglycerol (acyl-PG) from lysoglycerophospholipid by O-acylation. Uses acyl-CoA as acyl donors. Acylates 1-acyllysophosphatidylethanolamine (1-acyllyso-PE) and 1-acyllysophosphatidylglycerol (1-acyllyso-PG) at the sn-2-position. In Arabidopsis thaliana (Mouse-ear cress), this protein is N-acylphosphatidylethanolamine synthase.